The chain runs to 250 residues: Electron transfer flavoprotein subunit beta (250 aa).

It belongs to the ETF beta-subunit/FixA family. Heterodimer of an alpha and a beta subunit. Requires FAD as cofactor. The cofactor is AMP.

It localises to the mitochondrion matrix. Its function is as follows. The electron transfer flavoprotein serves as a specific electron acceptor for several dehydrogenases, including five acyl-CoA dehydrogenases, glutaryl-CoA and sarcosine dehydrogenase. It transfers the electrons to the main mitochondrial respiratory chain via ETF-ubiquinone oxidoreductase (ETF dehydrogenase). This chain is Electron transfer flavoprotein subunit beta (etfb), found in Dictyostelium discoideum (Social amoeba).